The sequence spans 137 residues: DNA-binding protein H-NS (137 aa).

A DNA-binding region spans residues 112 to 117; sequence QGRTPA.

The protein belongs to the histone-like protein H-NS family. In terms of assembly, homodimer that oligomerizes on DNA into higher-order complexes that form bridges between disparate regions of DNA compacting it. Interacts with Hha, YdgT and StpA.

It localises to the cytoplasm. It is found in the nucleoid. In terms of biological role, a DNA-binding protein implicated in transcriptional repression and chromosome organization and compaction. Binds nucleation sites in AT-rich DNA and bridges them, forming higher-order nucleoprotein complexes and condensing the chromosome. As many horizontally transferred genes are AT-rich, it plays a central role in silencing foreign genes. A subset of genes are repressed by H-NS in association with other proteins. The chain is DNA-binding protein H-NS (hns) from Salmonella paratyphi A (strain ATCC 9150 / SARB42).